We begin with the raw amino-acid sequence, 492 residues long: Bifunctional purine biosynthesis protein PurH (492 aa).

Residues 1–144 (MRKALLSVSD…KNFRHVITVV (144 aa)) enclose the MGS-like domain.

It belongs to the PurH family.

It catalyses the reaction (6R)-10-formyltetrahydrofolate + 5-amino-1-(5-phospho-beta-D-ribosyl)imidazole-4-carboxamide = 5-formamido-1-(5-phospho-D-ribosyl)imidazole-4-carboxamide + (6S)-5,6,7,8-tetrahydrofolate. The catalysed reaction is IMP + H2O = 5-formamido-1-(5-phospho-D-ribosyl)imidazole-4-carboxamide. The protein operates within purine metabolism; IMP biosynthesis via de novo pathway; 5-formamido-1-(5-phospho-D-ribosyl)imidazole-4-carboxamide from 5-amino-1-(5-phospho-D-ribosyl)imidazole-4-carboxamide (10-formyl THF route): step 1/1. It functions in the pathway purine metabolism; IMP biosynthesis via de novo pathway; IMP from 5-formamido-1-(5-phospho-D-ribosyl)imidazole-4-carboxamide: step 1/1. The protein is Bifunctional purine biosynthesis protein PurH of Macrococcus caseolyticus (strain JCSC5402) (Macrococcoides caseolyticum).